Reading from the N-terminus, the 242-residue chain is Type III pantothenate kinase (242 aa).

Position 6-13 (6-13 (DAGNTRIK)) interacts with ATP. Substrate contacts are provided by residues Y90 and 97–100 (GADR). Residue D99 is the Proton acceptor of the active site. T122 serves as a coordination point for ATP. T172 contacts substrate.

This sequence belongs to the type III pantothenate kinase family. In terms of assembly, homodimer. NH4(+) is required as a cofactor. Requires K(+) as cofactor.

It is found in the cytoplasm. The catalysed reaction is (R)-pantothenate + ATP = (R)-4'-phosphopantothenate + ADP + H(+). It functions in the pathway cofactor biosynthesis; coenzyme A biosynthesis; CoA from (R)-pantothenate: step 1/5. In terms of biological role, catalyzes the phosphorylation of pantothenate (Pan), the first step in CoA biosynthesis. The protein is Type III pantothenate kinase of Aromatoleum aromaticum (strain DSM 19018 / LMG 30748 / EbN1) (Azoarcus sp. (strain EbN1)).